A 352-amino-acid polypeptide reads, in one-letter code: Delta(7)-sterol 5(6)-desaturas erg3A (352 aa).

The N-linked (GlcNAc...) asparagine glycan is linked to N39. The next 3 helical transmembrane spans lie at F82–T102, I128–V147, and Y167–I187. A Fatty acid hydroxylase domain is found at P174 to G299. A Histidine box-1 motif is present at residues H188–H192. Residues H201–H205 carry the Histidine box-2 motif. A helical membrane pass occupies residues H231–I251. A Histidine box-3 motif is present at residues H276–H280.

The protein belongs to the sterol desaturase family. Requires Fe cation as cofactor.

It is found in the endoplasmic reticulum membrane. Functionally, delta(7)-sterol 5(6)-desaturase; part of the third module of ergosterol biosynthesis pathway that includes the late steps of the pathway. Erg3A is a minor delta(7)-sterol 5(6)-desaturase within the ergosterol pathway, erg3B being the major one. The third module or late pathway involves the ergosterol synthesis itself through consecutive reactions that mainly occur in the endoplasmic reticulum (ER) membrane. Firstly, the squalene synthase erg9 catalyzes the condensation of 2 farnesyl pyrophosphate moieties to form squalene, which is the precursor of all steroids. Squalene synthase is crucial for balancing the incorporation of farnesyl diphosphate (FPP) into sterol and nonsterol isoprene synthesis. Secondly, squalene is converted into lanosterol by the consecutive action of the squalene epoxidase erg1 and the lanosterol synthase erg7. Then, the delta(24)-sterol C-methyltransferase erg6 methylates lanosterol at C-24 to produce eburicol. Eburicol is the substrate of the sterol 14-alpha demethylase encoded by cyp51A and cyp51B, to yield 4,4,24-trimethyl ergosta-8,14,24(28)-trienol. The C-14 reductase erg24 then reduces the C14=C15 double bond which leads to 4,4-dimethylfecosterol. A sequence of further demethylations at C-4, involving the C-4 demethylation complex containing the C-4 methylsterol oxidases erg25A or erg25B, the sterol-4-alpha-carboxylate 3-dehydrogenase erg26 and the 3-keto-steroid reductase erg27, leads to the production of fecosterol via 4-methylfecosterol. The C-8 sterol isomerase erg2 then catalyzes the reaction which results in unsaturation at C-7 in the B ring of sterols and thus converts fecosterol to episterol. The sterol-C5-desaturase erg3B then catalyzes the introduction of a C-5 double bond in the B ring to produce 5-dehydroepisterol. The 2 other sterol-C5-desaturases, erg3A and erg3C, seem to be less important in ergosterol biosynthesis. The C-22 sterol desaturase erg5 further converts 5-dehydroepisterol into ergosta-5,7,22,24(28)-tetraen-3beta-ol by forming the C-22(23) double bond in the sterol side chain. Finally, ergosta-5,7,22,24(28)-tetraen-3beta-ol is substrate of the C-24(28) sterol reductases erg4A and erg4B to produce ergosterol. Possible alternative sterol biosynthetic pathways might exist from fecosterol to ergosterol, depending on the activities of the erg3 isoforms. The chain is Delta(7)-sterol 5(6)-desaturas erg3A from Aspergillus fumigatus (strain ATCC MYA-4609 / CBS 101355 / FGSC A1100 / Af293) (Neosartorya fumigata).